The chain runs to 202 residues: MTTAALPDLNYRDLLADRLFRQRTILLTGEVDDAMAERACSELVLLAAADPKRDIVLYINSPGGSVFAGLAIYDTMKLVPNDVVTVAMGFAASMGQVLLCSGTHGKRISLAHSRIMMHQPSAGIGGTAVDIAIQAESLERMKRQSQEILAAETGHPVEQIAEDSDRDRWFTADEARDYGIVDRVVSSFAEIAPHTTAPRIGL.

Catalysis depends on Ser-93, which acts as the Nucleophile. His-118 is a catalytic residue.

The protein belongs to the peptidase S14 family. In terms of assembly, fourteen ClpP subunits assemble into 2 heptameric rings which stack back to back to give a disk-like structure with a central cavity, resembling the structure of eukaryotic proteasomes.

The protein localises to the cytoplasm. The catalysed reaction is Hydrolysis of proteins to small peptides in the presence of ATP and magnesium. alpha-casein is the usual test substrate. In the absence of ATP, only oligopeptides shorter than five residues are hydrolyzed (such as succinyl-Leu-Tyr-|-NHMec, and Leu-Tyr-Leu-|-Tyr-Trp, in which cleavage of the -Tyr-|-Leu- and -Tyr-|-Trp bonds also occurs).. Functionally, cleaves peptides in various proteins in a process that requires ATP hydrolysis. Has a chymotrypsin-like activity. Plays a major role in the degradation of misfolded proteins. This chain is ATP-dependent Clp protease proteolytic subunit 3, found in Rhodococcus jostii (strain RHA1).